Reading from the N-terminus, the 336-residue chain is Dihydroorotate dehydrogenase (quinone) (336 aa).

FMN contacts are provided by residues 62–66 and Thr-86; that span reads AGLDK. Lys-66 is a substrate binding site. 111–115 contacts substrate; it reads NRMGF. Residues Asn-139 and Asn-172 each contribute to the FMN site. Asn-172 lines the substrate pocket. Ser-175 serves as the catalytic Nucleophile. Position 177 (Asn-177) interacts with substrate. Positions 217 and 245 each coordinate FMN. Residue 246–247 participates in substrate binding; sequence NT. FMN contacts are provided by residues Gly-268, Gly-297, and 318–319; that span reads YS.

Belongs to the dihydroorotate dehydrogenase family. Type 2 subfamily. Monomer. The cofactor is FMN.

Its subcellular location is the cell membrane. It carries out the reaction (S)-dihydroorotate + a quinone = orotate + a quinol. Its pathway is pyrimidine metabolism; UMP biosynthesis via de novo pathway; orotate from (S)-dihydroorotate (quinone route): step 1/1. In terms of biological role, catalyzes the conversion of dihydroorotate to orotate with quinone as electron acceptor. The chain is Dihydroorotate dehydrogenase (quinone) from Escherichia coli (strain UTI89 / UPEC).